A 319-amino-acid chain; its full sequence is Ester hydrolase C11orf54 homolog (319 aa).

Positions 270, 272, and 282 each coordinate Zn(2+).

In terms of assembly, monomer. Zn(2+) serves as cofactor.

It is found in the nucleus. The protein localises to the cytoplasm. Its function is as follows. Exhibits ester hydrolase activity on the substrate p-nitrophenyl acetate, in vitro. May regulate DNA damage and repair by regulating HIF1A degradation via chaperone-mediated autophagy (CMA). The protein is Ester hydrolase C11orf54 homolog of Danio rerio (Zebrafish).